A 314-amino-acid polypeptide reads, in one-letter code: Deoxymugineic acid synthase 1-A (314 aa).

The segment at 1-21 (MGAGDKTAAGMPRIGMGTAVQ) is disordered. Asp44 contributes to the NADP(+) binding site. Tyr49 functions as the Proton donor in the catalytic mechanism. Position 112 (His112) interacts with substrate. NADP(+)-binding positions include 158–159 (AN), Gln180, 258–266 (FDEARMREN), and 273–281 (ELTEEEHRR).

This sequence belongs to the aldo/keto reductase family. Mostly expressed in root tissues, observed in mesocotyl and embryonic roots, seedling roots, crown and seedling leafes, mature bracts, anthers, pistil, caryopsis and embryos.

The catalysed reaction is 2'-deoxymugineate + NAD(+) = 3''-deamino-3''-oxonicotianamine + NADH + H(+). It carries out the reaction 2'-deoxymugineate + NADP(+) = 3''-deamino-3''-oxonicotianamine + NADPH + H(+). It functions in the pathway siderophore biosynthesis. Its function is as follows. Catalyzes the reduction of a 3''-keto intermediate during the biosynthesis of 2'-deoxymugineic acid (DMA) from L-Met. Involved in the formation of phytosiderophores (MAs) belonging to the mugineic acid family and required to acquire iron. The chain is Deoxymugineic acid synthase 1-A from Triticum aestivum (Wheat).